We begin with the raw amino-acid sequence, 95 residues long: Homeotic protein bicoid (95 aa).

Disordered regions lie at residues N1–M29 and G42–D63.

This sequence belongs to the paired homeobox family. Bicoid subfamily.

The protein localises to the nucleus. Functionally, bicoid is polarity protein that provides positional cues for the development of head and thoracic segments. BCD regulates the expression of zygotic genes, possibly through its homeodomain, and inhibits the activity of other maternal gene products. The chain is Homeotic protein bicoid (bcd) from Drosophila subobscura (Fruit fly).